Reading from the N-terminus, the 94-residue chain is Putative regulatory protein Tmel_0100 (94 aa).

It belongs to the RemA family.

This Thermosipho melanesiensis (strain DSM 12029 / CIP 104789 / BI429) protein is Putative regulatory protein Tmel_0100.